The primary structure comprises 901 residues: HTH-type transcriptional regulator MalT (901 aa).

39–46 (SPAGYGKT) lines the ATP pocket. Residues 829–894 (ELIRTSPLTQ…DAVQHAQQLL (66 aa)) enclose the HTH luxR-type domain. The segment at residues 853–872 (NEQIAGELAVAATTIKTHIR) is a DNA-binding region (H-T-H motif).

This sequence belongs to the MalT family. In terms of assembly, monomer in solution. Oligomerizes to an active state in the presence of the positive effectors ATP and maltotriose.

With respect to regulation, activated by ATP and maltotriose, which are both required for DNA binding. Its function is as follows. Positively regulates the transcription of the maltose regulon whose gene products are responsible for uptake and catabolism of malto-oligosaccharides. Specifically binds to the promoter region of its target genes, recognizing a short DNA motif called the MalT box. The polypeptide is HTH-type transcriptional regulator MalT (Salmonella typhi).